The following is a 265-amino-acid chain: 3-methyl-2-oxobutanoate hydroxymethyltransferase (265 aa).

2 residues coordinate Mg(2+): aspartate 44 and aspartate 83. Residues 44–45 (DS), aspartate 83, and lysine 113 each bind 3-methyl-2-oxobutanoate. Glutamate 115 is a binding site for Mg(2+). Glutamate 183 functions as the Proton acceptor in the catalytic mechanism.

It belongs to the PanB family. Homodecamer; pentamer of dimers. Requires Mg(2+) as cofactor.

It is found in the cytoplasm. The enzyme catalyses 3-methyl-2-oxobutanoate + (6R)-5,10-methylene-5,6,7,8-tetrahydrofolate + H2O = 2-dehydropantoate + (6S)-5,6,7,8-tetrahydrofolate. Its pathway is cofactor biosynthesis; (R)-pantothenate biosynthesis; (R)-pantoate from 3-methyl-2-oxobutanoate: step 1/2. In terms of biological role, catalyzes the reversible reaction in which hydroxymethyl group from 5,10-methylenetetrahydrofolate is transferred onto alpha-ketoisovalerate to form ketopantoate. This chain is 3-methyl-2-oxobutanoate hydroxymethyltransferase, found in Leptospira interrogans serogroup Icterohaemorrhagiae serovar copenhageni (strain Fiocruz L1-130).